A 369-amino-acid chain; its full sequence is Lipoyl synthase, mitochondrial (369 aa).

Residues 1–32 (MLTKGVRALAWSPRRYITLDAEAAKPVVAKRR) constitute a mitochondrion transit peptide. Cys106, Cys111, Cys117, Cys136, Cys140, Cys143, and Ser351 together coordinate [4Fe-4S] cluster. A Radical SAM core domain is found at 121 to 340 (NKGSATATIM…KEKALELGFL (220 aa)).

The protein belongs to the radical SAM superfamily. Lipoyl synthase family. Requires [4Fe-4S] cluster as cofactor.

Its subcellular location is the mitochondrion. The catalysed reaction is [[Fe-S] cluster scaffold protein carrying a second [4Fe-4S](2+) cluster] + N(6)-octanoyl-L-lysyl-[protein] + 2 oxidized [2Fe-2S]-[ferredoxin] + 2 S-adenosyl-L-methionine + 4 H(+) = [[Fe-S] cluster scaffold protein] + N(6)-[(R)-dihydrolipoyl]-L-lysyl-[protein] + 4 Fe(3+) + 2 hydrogen sulfide + 2 5'-deoxyadenosine + 2 L-methionine + 2 reduced [2Fe-2S]-[ferredoxin]. Its pathway is protein modification; protein lipoylation via endogenous pathway; protein N(6)-(lipoyl)lysine from octanoyl-[acyl-carrier-protein]: step 2/2. Catalyzes the radical-mediated insertion of two sulfur atoms into the C-6 and C-8 positions of the octanoyl moiety bound to the lipoyl domains of lipoate-dependent enzymes, thereby converting the octanoylated domains into lipoylated derivatives. The protein is Lipoyl synthase, mitochondrial of Eremothecium gossypii (strain ATCC 10895 / CBS 109.51 / FGSC 9923 / NRRL Y-1056) (Yeast).